Here is a 450-residue protein sequence, read N- to C-terminus: MSQKIVILGSGESGVGAALLSKAKGYDTFVSDSSMITEAFIAELQQAGIAFEQGVHSEEKILSAQLIVKSPGIPEKAPIMKLIRSKAIEVISEIEFAYRHIHPGAKFIAITGSNGKTTTTLLTHHILAQLGYSVGLGGNIGTSLARQIIHEKKDVYVLELSSFQLDDMYTFKADVAVLLNITPDHLDRYEYKFENYTASKFRIFQNLTPADYYITYSEDSVIESYKKDHPVDARYVPVSLKQLYSAGAYSDEKTIQIHALDDTVVTCNTEEFPLQGKHNYINIMAALNAAVSIGADIHKSIASIKSFRNAPHRLEFVGSIYGVKFVNDSKATNVDSVWYALDSMKTPVVLIVGGVDKGNDYSQIEALVKEKVHTVVALGKDNSKVLSGFASMVSEIKEAHSMVEAIRIAHDSAKKGDTVLLSPACASFDLFKNYEDRGTQFRNLVIELAG.

112-118 (GSNGKTT) lines the ATP pocket.

This sequence belongs to the MurCDEF family.

Its subcellular location is the cytoplasm. It carries out the reaction UDP-N-acetyl-alpha-D-muramoyl-L-alanine + D-glutamate + ATP = UDP-N-acetyl-alpha-D-muramoyl-L-alanyl-D-glutamate + ADP + phosphate + H(+). It functions in the pathway cell wall biogenesis; peptidoglycan biosynthesis. Cell wall formation. Catalyzes the addition of glutamate to the nucleotide precursor UDP-N-acetylmuramoyl-L-alanine (UMA). The chain is UDP-N-acetylmuramoylalanine--D-glutamate ligase from Cytophaga hutchinsonii (strain ATCC 33406 / DSM 1761 / CIP 103989 / NBRC 15051 / NCIMB 9469 / D465).